The sequence spans 231 residues: Large ribosomal subunit protein uL1 (231 aa).

This sequence belongs to the universal ribosomal protein uL1 family. In terms of assembly, part of the 50S ribosomal subunit.

Binds directly to 23S rRNA. The L1 stalk is quite mobile in the ribosome, and is involved in E site tRNA release. Functionally, protein L1 is also a translational repressor protein, it controls the translation of the L11 operon by binding to its mRNA. This is Large ribosomal subunit protein uL1 from Acidovorax ebreus (strain TPSY) (Diaphorobacter sp. (strain TPSY)).